We begin with the raw amino-acid sequence, 496 residues long: Probable cytosol aminopeptidase (496 aa).

Mn(2+) is bound by residues K262 and D267. The active site involves K274. Residues D285, D344, and E346 each contribute to the Mn(2+) site. R348 is a catalytic residue.

Belongs to the peptidase M17 family. The cofactor is Mn(2+).

It is found in the cytoplasm. The catalysed reaction is Release of an N-terminal amino acid, Xaa-|-Yaa-, in which Xaa is preferably Leu, but may be other amino acids including Pro although not Arg or Lys, and Yaa may be Pro. Amino acid amides and methyl esters are also readily hydrolyzed, but rates on arylamides are exceedingly low.. It catalyses the reaction Release of an N-terminal amino acid, preferentially leucine, but not glutamic or aspartic acids.. In terms of biological role, presumably involved in the processing and regular turnover of intracellular proteins. Catalyzes the removal of unsubstituted N-terminal amino acids from various peptides. This is Probable cytosol aminopeptidase from Rhizobium etli (strain CIAT 652).